Reading from the N-terminus, the 198-residue chain is Superoxide dismutase [Mn], mitochondrial (198 aa).

Histidine 26 is a binding site for Mn(2+). Tyrosine 34 carries the 3'-nitrotyrosine modification. Residues lysine 44 and lysine 51 each carry the N6-acetyllysine; alternate modification. N6-succinyllysine; alternate is present on residues lysine 44 and lysine 51. A Mn(2+)-binding site is contributed by histidine 74. Lysine 90 is modified (N6-acetyllysine). Residues lysine 98 and lysine 106 each carry the N6-acetyllysine; alternate modification. Residues lysine 98 and lysine 106 each carry the N6-succinyllysine; alternate modification. Mn(2+)-binding residues include aspartate 159 and histidine 163. Position 178 is an N6-acetyllysine (lysine 178).

Belongs to the iron/manganese superoxide dismutase family. In terms of assembly, homotetramer. It depends on Mn(2+) as a cofactor. In terms of processing, nitrated under oxidative stress. Nitration coupled with oxidation inhibits the catalytic activity. Acetylation at Lys-98 decreases enzymatic activity. Deacetylated by SIRT3 upon exposure to ionizing radiations or after long fasting. Post-translationally, polyubiquitinated; leading to proteasomal degradation. Deubiquitinated by USP36 which increases protein stability.

It localises to the mitochondrion matrix. The enzyme catalyses 2 superoxide + 2 H(+) = H2O2 + O2. Destroys superoxide anion radicals which are normally produced within the cells and which are toxic to biological systems. The polypeptide is Superoxide dismutase [Mn], mitochondrial (SOD2) (Hylobates lar (Lar gibbon)).